We begin with the raw amino-acid sequence, 275 residues long: NH(3)-dependent NAD(+) synthetase (275 aa).

Position 50 to 57 (50 to 57) interacts with ATP; the sequence is GISGGVDS. Asp56 contributes to the Mg(2+) binding site. Arg147 contacts deamido-NAD(+). Thr167 serves as a coordination point for ATP. Glu172 lines the Mg(2+) pocket. The deamido-NAD(+) site is built by Lys180 and Asp187. ATP-binding residues include Lys196 and Thr218. A deamido-NAD(+)-binding site is contributed by 267–268; the sequence is HK.

The protein belongs to the NAD synthetase family. In terms of assembly, homodimer.

It carries out the reaction deamido-NAD(+) + NH4(+) + ATP = AMP + diphosphate + NAD(+) + H(+). Its pathway is cofactor biosynthesis; NAD(+) biosynthesis; NAD(+) from deamido-NAD(+) (ammonia route): step 1/1. Functionally, catalyzes the ATP-dependent amidation of deamido-NAD to form NAD. Uses ammonia as a nitrogen source. In Pseudomonas savastanoi pv. phaseolicola (strain 1448A / Race 6) (Pseudomonas syringae pv. phaseolicola (strain 1448A / Race 6)), this protein is NH(3)-dependent NAD(+) synthetase.